The primary structure comprises 435 residues: MTQTVNVIGAGLAGSEAAYQLSERGIKVNLIEMRPVKQTPAHHTDKFAELVCSNSLRGNALTNGVGVLKEEMRRLNSIIIEAADKARVPAGGALAVDRHDFSGYITETLKNHENITVINEEINAIPDGYTIIATGPLTTETLAQEIVDITGKDQLYFYDAAAPIIEKESIDMDKVYLKSRYDKGEAAYLNCPMTEDEFNRFYDAVLEAEAAPVNSFEKEKYFEGCMPFEVMAERGRKTLLFGPMKPVGLEDPKTGKRPYAVVQLRQDDAAGTLYNIVGFQTHLKWGAQKEVIKLIPGLENVDIVRYGVMHRNTFINSPDVLNEKYELISQPNIQFAGQMTGVEGYVESAASGLVAGINLAHKILGKGEVVFPRETMIGSMAYYISHAKNNKNFQPMNANFGLLPSLETRIKDKKERYEAQANRALDYLENFKKTL.

9 to 14 (GAGLAG) lines the FAD pocket.

The protein belongs to the MnmG family. TrmFO subfamily. FAD is required as a cofactor.

The protein localises to the cytoplasm. It carries out the reaction uridine(54) in tRNA + (6R)-5,10-methylene-5,6,7,8-tetrahydrofolate + NADH + H(+) = 5-methyluridine(54) in tRNA + (6S)-5,6,7,8-tetrahydrofolate + NAD(+). It catalyses the reaction uridine(54) in tRNA + (6R)-5,10-methylene-5,6,7,8-tetrahydrofolate + NADPH + H(+) = 5-methyluridine(54) in tRNA + (6S)-5,6,7,8-tetrahydrofolate + NADP(+). Its function is as follows. Catalyzes the folate-dependent formation of 5-methyl-uridine at position 54 (M-5-U54) in all tRNAs. In Staphylococcus aureus (strain MRSA252), this protein is Methylenetetrahydrofolate--tRNA-(uracil-5-)-methyltransferase TrmFO.